An 863-amino-acid chain; its full sequence is Aminopeptidase N (863 aa).

Residues Glu-124 and 263–267 contribute to the substrate site; that span reads GAMEN. His-299 is a binding site for Zn(2+). Glu-300 serves as the catalytic Proton acceptor. Residues His-303 and Glu-322 each contribute to the Zn(2+) site.

This sequence belongs to the peptidase M1 family. Zn(2+) serves as cofactor.

It catalyses the reaction Release of an N-terminal amino acid, Xaa-|-Yaa- from a peptide, amide or arylamide. Xaa is preferably Ala, but may be most amino acids including Pro (slow action). When a terminal hydrophobic residue is followed by a prolyl residue, the two may be released as an intact Xaa-Pro dipeptide.. Functionally, aminopeptidase N is involved in the degradation of intracellular peptides generated by protein breakdown during normal growth as well as in response to nutrient starvation. The sequence is that of Aminopeptidase N (pepN) from Caulobacter vibrioides (strain ATCC 19089 / CIP 103742 / CB 15) (Caulobacter crescentus).